A 1063-amino-acid chain; its full sequence is Probable hemoglobin and hemoglobin-haptoglobin-binding protein 1 (1063 aa).

The signal sequence occupies residues 1–24 (MTNFKFSLLACSIAFALNASIAYA). 7 tandem repeats follow at residues 26 to 29 (QPTN), 30 to 33 (QPTN), 34 to 37 (QPTN), 38 to 41 (QPTN), 42 to 45 (QPTN), 46 to 49 (QPTN), and 50 to 53 (QPTN). Residues 26–53 (QPTNQPTNQPTNQPTNQPTNQPTNQPTN) form a 7 X 4 AA tandem repeats of Q-P-T-N region. Positions 28-55 (TNQPTNQPTNQPTNQPTNQPTNQPTNQN) are enriched in low complexity. The disordered stretch occupies residues 28-57 (TNQPTNQPTNQPTNQPTNQPTNQPTNQNSN). A TonB box motif is present at residues 63–70 (EQINVSGS). Residues 66-200 (NVSGSSENIN…LGGSVIFETK (135 aa)) form the TBDR plug domain. Residues 208–1063 (DKDYYLSYKR…NYRMSVQFEF (856 aa)) form the TBDR beta-barrel domain. The TonB C-terminal box signature appears at 1046 to 1063 (NRFYAPGRNYRMSVQFEF).

The protein belongs to the TonB-dependent receptor family. Hemoglobin/haptoglobin binding protein subfamily.

It is found in the cell outer membrane. Its function is as follows. Acts as a receptor for hemoglobin or the hemoglobin/haptoglobin complex of the human host and is required for heme uptake. This chain is Probable hemoglobin and hemoglobin-haptoglobin-binding protein 1, found in Haemophilus influenzae (strain ATCC 51907 / DSM 11121 / KW20 / Rd).